The chain runs to 327 residues: Ubiquinone biosynthesis O-methyltransferase, mitochondrial (327 aa).

Positions 79, 142, 165, and 210 each coordinate S-adenosyl-L-methionine. Mg(2+) contacts are provided by glutamate 211, glutamate 214, and histidine 215.

This sequence belongs to the class I-like SAM-binding methyltransferase superfamily. UbiG/COQ3 family. As to quaternary structure, component of a multi-subunit COQ enzyme complex, composed of at least COQ3, COQ4, COQ5, COQ6, COQ7 and COQ9. Requires Mg(2+) as cofactor.

It localises to the mitochondrion inner membrane. The catalysed reaction is a 3,4-dihydroxy-5-(all-trans-polyprenyl)benzoate + S-adenosyl-L-methionine = a 4-hydroxy-3-methoxy-5-(all-trans-polyprenyl)benzoate + S-adenosyl-L-homocysteine + H(+). It carries out the reaction a 3-demethylubiquinone + S-adenosyl-L-methionine = a ubiquinone + S-adenosyl-L-homocysteine. The enzyme catalyses a 3-demethylubiquinol + S-adenosyl-L-methionine = a ubiquinol + S-adenosyl-L-homocysteine + H(+). It functions in the pathway cofactor biosynthesis; ubiquinone biosynthesis. Its function is as follows. O-methyltransferase required for two non-consecutive steps during ubiquinone biosynthesis. Catalyzes the 2 O-methylation of 3,4-dihydroxy-5-(all-trans-polyprenyl)benzoic acid into 4-hydroxy-3-methoxy-5-(all-trans-polyprenyl)benzoic acid. Also catalyzes the last step of ubiquinone biosynthesis by mediating methylation of 3-demethylubiquinone into ubiquinone. Also able to mediate the methylation of 3-demethylubiquinol into ubiquinol. The polypeptide is Ubiquinone biosynthesis O-methyltransferase, mitochondrial (Candida albicans (Yeast)).